A 73-amino-acid polypeptide reads, in one-letter code: UPF0346 protein SH1485 (73 aa).

The protein belongs to the UPF0346 family.

The sequence is that of UPF0346 protein SH1485 from Staphylococcus haemolyticus (strain JCSC1435).